We begin with the raw amino-acid sequence, 860 residues long: Protein sey1 (860 aa).

The Cytoplasmic portion of the chain corresponds to 1–742 (MATNGHFASI…KRSAIGGMTQ (742 aa)). The GB1/RHD3-type G domain maps to 51–300 (GFNYHLISVF…IPADGFSRYA (250 aa)). Residue 61 to 68 (GSQSTGKS) participates in GTP binding. Residues 443–501 (YDFAEIVNEEAKKAVDKFEEVARATVVDGTSWSDYKQELALYEKELAEVSARLRRDEMR) adopt a coiled-coil conformation. A helical transmembrane segment spans residues 743 to 763 (VPLYFYGLLLALGWNEIIAVL). Over 764 to 766 (RNP) the chain is Lumenal. The chain crosses the membrane as a helical span at residues 767 to 787 (AYFFLLFVCAVGAYITYQLNL). The Cytoplasmic portion of the chain corresponds to 788 to 860 (WGPIIKMTEA…AAADEDVDDL (73 aa)). The segment at 818 to 860 (DTGRQAIAMSTPGGSGRGGEEHEMSRLNQQGKSAAADEDVDDL) is disordered.

Belongs to the TRAFAC class dynamin-like GTPase superfamily. GB1/RHD3 GTPase family. RHD3 subfamily.

Its subcellular location is the endoplasmic reticulum membrane. Functionally, cooperates with the reticulon proteins and tubule-shaping DP1 family proteins to generate and maintain the structure of the tubular endoplasmic reticulum network. Has GTPase activity, which is required for its function in ER organization. This Aspergillus oryzae (strain ATCC 42149 / RIB 40) (Yellow koji mold) protein is Protein sey1 (sey1).